The sequence spans 129 residues: Follitropin subunit beta (129 aa).

The signal sequence occupies residues 1-20 (MKSVQFCFLFCCWRAICCRS). 6 cysteine pairs are disulfide-bonded: cysteine 21-cysteine 69, cysteine 35-cysteine 84, cysteine 38-cysteine 122, cysteine 46-cysteine 100, cysteine 50-cysteine 102, and cysteine 105-cysteine 112. 2 N-linked (GlcNAc...) asparagine glycosylation sites follow: asparagine 25 and asparagine 42.

It belongs to the glycoprotein hormones subunit beta family. Heterodimer. The active follitropin is a heterodimer composed of an alpha chain/CGA shared with other hormones and a unique beta chain/FSHB shown here.

The protein resides in the secreted. In terms of biological role, together with the alpha chain CGA constitutes follitropin, the follicle-stimulating hormone, and provides its biological specificity to the hormone heterodimer. Binds FSHR, a G protein-coupled receptor, on target cells to activate downstream signaling pathways. Follitropin is involved in follicle development and spermatogenesis in reproductive organs. This chain is Follitropin subunit beta (FSHB), found in Bos taurus (Bovine).